A 341-amino-acid chain; its full sequence is Uroporphyrinogen decarboxylase (341 aa).

Residues 23-27, aspartate 73, tyrosine 147, serine 202, and histidine 318 each bind substrate; that span reads RQAGR.

It belongs to the uroporphyrinogen decarboxylase family. In terms of assembly, homodimer.

It localises to the cytoplasm. It carries out the reaction uroporphyrinogen III + 4 H(+) = coproporphyrinogen III + 4 CO2. Its pathway is porphyrin-containing compound metabolism; protoporphyrin-IX biosynthesis; coproporphyrinogen-III from 5-aminolevulinate: step 4/4. Functionally, catalyzes the decarboxylation of four acetate groups of uroporphyrinogen-III to yield coproporphyrinogen-III. This is Uroporphyrinogen decarboxylase from Erythrobacter litoralis (strain HTCC2594).